A 312-amino-acid chain; its full sequence is Olfactory receptor 6N1 (312 aa).

Residues 1–25 (MDTGNWSQVAEFIILGFPHLQGVQI) lie on the Extracellular side of the membrane. N-linked (GlcNAc...) asparagine glycosylation occurs at N5. Residues 26 to 46 (YLFLLLLLIYLMTVLGNLLIF) form a helical membrane-spanning segment. Topologically, residues 47–54 (LVVCLDSR) are cytoplasmic. The helical transmembrane segment at 55 to 75 (LHTPMYHFVSILSFSELGYTA) threads the bilayer. Over 76-99 (ATIPKMLANLLSEKKTISFSGCLL) the chain is Extracellular. A disulfide bond links C97 and C189. The helical transmembrane segment at 100–120 (QIYFFHSLGATECYLLTAMAY) threads the bilayer. Over 121–139 (DRYLAICRPLHYPTLMTPT) the chain is Cytoplasmic. A helical membrane pass occupies residues 140 to 160 (LCAEIAIGCWLGGLAGPVVEI). Residues 161 to 197 (SLISRLPFCGPNRIQHVFCDFPPVLSLACTDTSINVL) are Extracellular-facing. A helical transmembrane segment spans residues 198–217 (VDFVINSCKILATFLLILCS). Topologically, residues 218-237 (YVQIICTVLRIPSAAGKRKA) are cytoplasmic. A helical membrane pass occupies residues 238-258 (ISTCASHFTVVLIFYGSILSM). Over 259–271 (YVQLKKSYSLDYD) the chain is Extracellular. Residues 272 to 292 (QALAVVYSVLTPFLNPFIYSL) form a helical membrane-spanning segment. The Cytoplasmic portion of the chain corresponds to 293–312 (RNKEIKEAVRRQLKRIGILA).

The protein belongs to the G-protein coupled receptor 1 family.

Its subcellular location is the cell membrane. Its function is as follows. Odorant receptor. This Homo sapiens (Human) protein is Olfactory receptor 6N1 (OR6N1).